A 607-amino-acid polypeptide reads, in one-letter code: Glutamyl-tRNA(Gln) amidotransferase subunit E (607 aa).

It belongs to the GatB/GatE family. GatE subfamily. As to quaternary structure, heterodimer of GatD and GatE.

It carries out the reaction L-glutamyl-tRNA(Gln) + L-glutamine + ATP + H2O = L-glutaminyl-tRNA(Gln) + L-glutamate + ADP + phosphate + H(+). Functionally, allows the formation of correctly charged Gln-tRNA(Gln) through the transamidation of misacylated Glu-tRNA(Gln) in organisms which lack glutaminyl-tRNA synthetase. The reaction takes place in the presence of glutamine and ATP through an activated gamma-phospho-Glu-tRNA(Gln). The GatDE system is specific for glutamate and does not act on aspartate. This Pyrobaculum islandicum (strain DSM 4184 / JCM 9189 / GEO3) protein is Glutamyl-tRNA(Gln) amidotransferase subunit E.